We begin with the raw amino-acid sequence, 160 residues long: Cyclic pyranopterin monophosphate synthase (160 aa).

Substrate-binding positions include 75–77 (LCH) and 113–114 (ME). The active site involves Asp128.

It belongs to the MoaC family. As to quaternary structure, homohexamer; trimer of dimers.

The enzyme catalyses (8S)-3',8-cyclo-7,8-dihydroguanosine 5'-triphosphate = cyclic pyranopterin phosphate + diphosphate. It functions in the pathway cofactor biosynthesis; molybdopterin biosynthesis. Its function is as follows. Catalyzes the conversion of (8S)-3',8-cyclo-7,8-dihydroguanosine 5'-triphosphate to cyclic pyranopterin monophosphate (cPMP). This Methylobacterium nodulans (strain LMG 21967 / CNCM I-2342 / ORS 2060) protein is Cyclic pyranopterin monophosphate synthase.